The chain runs to 77 residues: Liver-expressed antimicrobial peptide 2 (77 aa).

The signal sequence occupies residues 1-22 (MWHLKLCAVLMIFLLLLGQIDG). Positions 23 to 37 (SPIPEVSSAKRRPRR) are excised as a propeptide. 2 disulfides stabilise this stretch: cysteine 54-cysteine 65 and cysteine 60-cysteine 70.

This sequence belongs to the LEAP2 family.

The protein resides in the secreted. Its function is as follows. Has an antimicrobial activity. In Homo sapiens (Human), this protein is Liver-expressed antimicrobial peptide 2 (LEAP2).